The chain runs to 490 residues: Betaine aldehyde dehydrogenase (490 aa).

Threonine 26, isoleucine 27, and aspartate 93 together coordinate K(+). Residue 150-152 (GAW) coordinates NAD(+). Lysine 162 (charge relay system) is an active-site residue. An NAD(+)-binding site is contributed by 176 to 179 (KPSE). A K(+)-binding site is contributed by valine 180. Residue 230 to 233 (GTST) coordinates NAD(+). K(+) is bound at residue leucine 246. Glutamate 252 serves as the catalytic Proton acceptor. Residues glycine 254, cysteine 286, and glutamate 387 each coordinate NAD(+). The active-site Nucleophile is cysteine 286. At cysteine 286 the chain carries Cysteine sulfenic acid (-SOH). Lysine 457 and glycine 460 together coordinate K(+). Glutamate 464 serves as the catalytic Charge relay system.

The protein belongs to the aldehyde dehydrogenase family. Dimer of dimers. The cofactor is K(+).

It catalyses the reaction betaine aldehyde + NAD(+) + H2O = glycine betaine + NADH + 2 H(+). Its pathway is amine and polyamine biosynthesis; betaine biosynthesis via choline pathway; betaine from betaine aldehyde: step 1/1. In terms of biological role, involved in the biosynthesis of the osmoprotectant glycine betaine. Catalyzes the irreversible oxidation of betaine aldehyde to the corresponding acid. The chain is Betaine aldehyde dehydrogenase from Pseudomonas aeruginosa (strain UCBPP-PA14).